The sequence spans 162 residues: Mitochondrial fission process protein 1 (162 aa).

3 helical membrane passes run 36 to 56 (SLVK…YVAA), 81 to 101 (AIIA…IPGF), and 128 to 148 (TVTA…DAFV).

It belongs to the MTFP1 family.

Its subcellular location is the mitochondrion inner membrane. Its function is as follows. Involved in the mitochondrial division probably by regulating membrane fission. Loss-of-function leads to apoptosis. The protein is Mitochondrial fission process protein 1 of Caenorhabditis briggsae.